An 889-amino-acid chain; its full sequence is MEKAIYSKDGKRVINLKSRETFKTENVSFEWGADDSKPKSKKKKKRKSKGQQVIIDSIDLDERSIVHGVMEAKMKAEKLARLKKSVNDTFPPSPASGLSPSMERQTIKYFWLSLTSEQRRELVQVEKEAVLNKMKRQQKNTCECDICGRKRVAIEQELETLYADYYKELDALAESKDLPLLPLPSMGFFQADDVLRGGHQDGNTTEELSEATNRLSIAPATTATTRPLPQNLGKEIDEEGDTEEDEPYGFEEGEDVQSLDVSSVADDLLTNDGKKFIEMMERLAEKRAGRIEEIRDGEDEEPVVVEDDNDDEEYENDSDYSDYSSEYSQTGESLTADQRMEEGRRMFQIFAARMFEQRVLHAYKQSVAAQVKAELQQMEEEKKTLDLEKEARDQQRRERKKEKKRAQKAIKEEEKRKAAAEREEREKREAEEAERLRLEAERKQQEKEREKAARKAASEAKQKARQEEQARLAREKEEKRLARIREMEERMRLAKEKEEREKEELRARQQQEEDERREKERLEEERIENERLEAERIENERLEKEREQQRLEEEKERQRIKEEREKQKLEEEREKRASMSIPLSKPLPGKTQIPASQPGTSLGGLQQPVPQAAPVAPVAMMPQSPSPQLPPGLTQHVAQSQILLDRLTPDPTSRMTPERHTPSPGSTTSNAKTLLDSLLRPAQGPSTPPPGPGTPRSSISHVAPVGAIGTIGSPGQVNQQPLHVHPGHMNHLSQGPVTPGQVNHPVGNIGHVGNVGTVGSIGLVNPPEQPISQPISPPSTTLPISQHRFDPWNSSYSGIASSSTPGNRLWGSSGEVPGNVIRQAALDAYEELHKNGSIDCNGFVNSRALQNTAQKYSSTGQGFGVSELFKACQGSFDIVGGLMKPRGGL.

5 disordered regions span residues Trp31–Gln51, Gly197–Asp255, Ile291–Arg339, Glu380–Pro610, and Thr648–His701. The segment covering Lys39–Lys49 has biased composition (basic residues). Residues Asp201–Leu215 are compositionally biased toward polar residues. The span at Ala218 to Pro229 shows a compositional bias: low complexity. 2 stretches are compositionally biased toward acidic residues: residues Ile236 to Asp255 and Arg295 to Tyr320. The stretch at Tyr363 to Ile581 forms a coiled coil. The segment covering Glu380 to Arg396 has biased composition (basic and acidic residues). Residues Arg397–Lys408 show a composition bias toward basic residues. Residues Ala409–Ala577 show a composition bias toward basic and acidic residues. Polar residues-rich tracts occupy residues Ile593–Gly604 and Ser663–Lys672.

This sequence belongs to the NST1 family.

The protein resides in the cytoplasm. May act as a negative regulator of salt tolerance. The sequence is that of Stress response protein NST1 (NST1) from Yarrowia lipolytica (strain CLIB 122 / E 150) (Yeast).